Consider the following 307-residue polypeptide: UPF0282 protein PH1002 (307 aa).

Belongs to the UPF0282 family.

This Pyrococcus horikoshii (strain ATCC 700860 / DSM 12428 / JCM 9974 / NBRC 100139 / OT-3) protein is UPF0282 protein PH1002.